A 154-amino-acid polypeptide reads, in one-letter code: D-aminoacyl-tRNA deacylase (154 aa).

The short motif at 137-138 (GP) is the Gly-cisPro motif, important for rejection of L-amino acids element.

This sequence belongs to the DTD family. Homodimer.

It localises to the cytoplasm. It catalyses the reaction glycyl-tRNA(Ala) + H2O = tRNA(Ala) + glycine + H(+). The catalysed reaction is a D-aminoacyl-tRNA + H2O = a tRNA + a D-alpha-amino acid + H(+). In terms of biological role, an aminoacyl-tRNA editing enzyme that deacylates mischarged D-aminoacyl-tRNAs. Also deacylates mischarged glycyl-tRNA(Ala), protecting cells against glycine mischarging by AlaRS. Acts via tRNA-based rather than protein-based catalysis; rejects L-amino acids rather than detecting D-amino acids in the active site. By recycling D-aminoacyl-tRNA to D-amino acids and free tRNA molecules, this enzyme counteracts the toxicity associated with the formation of D-aminoacyl-tRNA entities in vivo and helps enforce protein L-homochirality. This is D-aminoacyl-tRNA deacylase from Thermomicrobium roseum (strain ATCC 27502 / DSM 5159 / P-2).